Here is a 154-residue protein sequence, read N- to C-terminus: Protein X (154 aa).

Residues 68 to 117 form a mitochondrial targeting sequence region; that stretch reads PCALRFTSARRMETTVNAHRNLPKVLHKRTLGLSVMSTTDLEAYFKDCVF.

It belongs to the orthohepadnavirus protein X family. As to quaternary structure, may form homodimer. May interact with host CEBPA, CFLAR, CREB1, DDB1, E4F1, HBXIP, HSPD1/HSP60, NFKBIA, POLR2E and SMAD4. Interacts with host SMC5-SMC6 complex and induces its degradation. Interacts with host TRPC4AP; leading to prevent ubiquitination of TRPC4AP. Interacts with host PLSCR1; this interaction promotes ubiquitination and degradation of HBx and impairs HBx-mediated cell proliferation. Post-translationally, a fraction may be phosphorylated in insect cells and HepG2 cells, a human hepatoblastoma cell line. Phosphorylated in vitro by host protein kinase C or mitogen-activated protein kinase. N-acetylated in insect cells.

The protein localises to the host cytoplasm. Its subcellular location is the host nucleus. The protein resides in the host mitochondrion. Functionally, multifunctional protein that plays a role in silencing host antiviral defenses and promoting viral transcription. Does not seem to be essential for HBV infection. May be directly involved in development of cirrhosis and liver cancer (hepatocellular carcinoma). Most of cytosolic activities involve modulation of cytosolic calcium. The effect on apoptosis is controversial depending on the cell types in which the studies have been conducted. May induce apoptosis by localizing in mitochondria and causing loss of mitochondrial membrane potential. May also modulate apoptosis by binding host CFLAR, a key regulator of the death-inducing signaling complex (DISC). Promotes viral transcription by using the host E3 ubiquitin ligase DDB1 to target the SMC5-SMC6 complex to proteasomal degradation. This host complex would otherwise bind to viral episomal DNA, and prevents its transcription. Moderately stimulates transcription of many different viral and cellular transcription elements. Promoters and enhancers stimulated by HBx contain DNA binding sites for NF-kappa-B, AP-1, AP-2, c-EBP, ATF/CREB, or the calcium-activated factor NF-AT. The sequence is that of Protein X from Hepatitis B virus genotype B1 (isolate Japan/Yamagata-2/1998) (HBV-B).